The chain runs to 88 residues: Cell division topological specificity factor (88 aa).

Belongs to the MinE family.

Functionally, prevents the cell division inhibition by proteins MinC and MinD at internal division sites while permitting inhibition at polar sites. This ensures cell division at the proper site by restricting the formation of a division septum at the midpoint of the long axis of the cell. The chain is Cell division topological specificity factor from Salmonella agona (strain SL483).